Here is a 275-residue protein sequence, read N- to C-terminus: MTRKIAIYGKGGIGKSTTQQNTAAAMAHFYDKKVFIHGCDPKADSTRLILGGMPQKTLMDMLRDEGEEKITTENIVRVGYEDIRCVESGGPEPGVGCAGRGVITAIDLMEKNGAYTEDLDFVFFDVLGDVVCGGFAMPIRDGKAQEVYIVASGEMMAVYAANNICKGLVKYANQSGVRLGGIICNSRMVDLEREFIEEFAASIGTQMIHFMPRDNIVQKAEFNKQTVIEFDDTCNQAKEYGELARKIIENEMFVIPTPLKMDDLEAMVVKYGMTD.

9–16 (GKGGIGKS) contributes to the ATP binding site. A [4Fe-4S] cluster-binding site is contributed by Cys97. An ADP-ribosylarginine; by dinitrogenase reductase ADP-ribosyltransferase modification is found at Arg100. Residue Cys132 participates in [4Fe-4S] cluster binding.

The protein belongs to the NifH/BchL/ChlL family. In terms of assembly, homodimer. It depends on [4Fe-4S] cluster as a cofactor. Post-translationally, the reversible ADP-ribosylation of Arg-100 inactivates the nitrogenase reductase and regulates nitrogenase activity.

The catalysed reaction is N2 + 8 reduced [2Fe-2S]-[ferredoxin] + 16 ATP + 16 H2O = H2 + 8 oxidized [2Fe-2S]-[ferredoxin] + 2 NH4(+) + 16 ADP + 16 phosphate + 6 H(+). The key enzymatic reactions in nitrogen fixation are catalyzed by the nitrogenase complex, which has 2 components: the iron protein and the molybdenum-iron protein. The sequence is that of Nitrogenase iron protein 3 (nifH3) from Clostridium pasteurianum.